The chain runs to 3491 residues: Erythronolide synthase EryA1 (3491 aa).

The segment at 1–484 (MSGPRSRTTS…TPRALAEALA (484 aa)) is loading domain. The segment at 57-372 (VFVFPGQGAQ…AAQAFTGGVA (316 aa)) is acyltransferase 1. Ser145 serves as the catalytic Acyl-ester intermediate; for acyltransferase 1 activity. Positions 386 to 410 (PALCRSSRRPRRKTSRPSPASTGTR) are disordered. Basic residues predominate over residues 391–400 (SSRRPRRKTS). One can recognise a Carrier 1 domain in the interval 412–487 (RTCCERLLAV…ALAEALAAGT (76 aa)). Ser447 is modified (O-(pantetheine 4'-phosphoryl)serine). Residues 504–928 (GEPVAVVAMA…GTNAHAIIEE (425 aa)) form the Ketosynthase family 3 (KS3) 1 domain. Module regions lie at residues 507–1958 (VAVV…AHLA) and 1982–3404 (IAIV…GFLD). Residue Cys677 is the Acyl-thioester intermediate; for beta-ketoacyl synthase 1 activity of the active site. Catalysis depends on for beta-ketoacyl synthase 1 activity residues His812 and His850. The tract at residues 1031-1352 (VFVFPGQGWQ…ALSRAFAAGV (322 aa)) is acyltransferase 2. The active-site Acyl-ester intermediate; for acyltransferase 2 activity is Ser1128. The tract at residues 1613 to 1790 (GTVLVTGGTG…ATAVAWGTWA (178 aa)) is beta-ketoacyl reductase 1. NADP(+) contacts are provided by residues 1621–1624 (TGGV), 1644–1647 (SRSG), 1673–1674 (DV), Lys1723, and 1745–1746 (FS). Tyr1760 acts as the For beta-ketoacyl reductase 1 activity in catalysis. Residues 1886–1961 (EALFELVRSH…TLAAHLAAEL (76 aa)) form the Carrier 2 domain. Ser1921 carries the O-(pantetheine 4'-phosphoryl)serine modification. The Ketosynthase family 3 (KS3) 2 domain maps to 1979-2402 (DEPIAIVGMA…GTNAHVIIAE (424 aa)). Cys2148 serves as the catalytic Acyl-thioester intermediate; for beta-ketoacyl synthase 2 activity. Residues His2283 and His2323 each act as for beta-ketoacyl synthase 2 activity in the active site. The tract at residues 2508–2827 (VFVFPGQGAQ…LADAHTRGVA (320 aa)) is acyltransferase 3. The active-site Acyl-ester intermediate; for acyltransferase 3 activity is Ser2598. The beta-ketoacyl reductase 2 stretch occupies residues 3057-3233 (GTILVTGGTA…ATSVAWGLWA (177 aa)). NADP(+) is bound by residues 3065-3068 (TAGL), 3088-3091 (SRRG), 3117-3118 (DV), Lys3168, and 3188-3189 (FS). Tyr3203 (for beta-ketoacyl reductase 2 activity) is an active-site residue. Residues 3329–3407 (ERTAELVRLV…AVAGFLDAEL (79 aa)) form the Carrier 3 domain. At Ser3367 the chain carries O-(pantetheine 4'-phosphoryl)serine. Residues 3456–3491 (QAADASGTGANPSGDDLGEAGVDELLEALGRELDGD) are disordered. Residues 3471–3481 (DLGEAGVDELL) are compositionally biased toward acidic residues.

Homodimer. Erythronolide synthase is composed of EryAI, EryAII and EryAIII multimodular (2 modules) polypeptides each coding for a functional synthase subunit which participates in 2 of the six FAS-like elongation steps required for formation of the polyketide. Module 1, 2, 3, 4, 5, and 6 participating in biosynthesis steps 1, 2, 3, 4, 5, and 6, respectively. The cofactor is pantetheine 4'-phosphate.

It carries out the reaction 6 (S)-methylmalonyl-CoA + propanoyl-CoA + 6 NADPH + 12 H(+) = 6-deoxyerythronolide B + 6 CO2 + 6 NADP(+) + 7 CoA + H2O. It functions in the pathway antibiotic biosynthesis; erythromycin biosynthesis. Functionally, involved in the biosynthesis of antibiotic erythromycin via the biosynthesis of its aglycone precursor, 6-deoxyerythronolide B (6-dEB). In Saccharopolyspora erythraea (Streptomyces erythraeus), this protein is Erythronolide synthase EryA1 (eryA).